Reading from the N-terminus, the 270-residue chain is Formamidopyrimidine-DNA glycosylase (270 aa).

P2 functions as the Schiff-base intermediate with DNA in the catalytic mechanism. E3 (proton donor) is an active-site residue. The active-site Proton donor; for beta-elimination activity is the K57. 3 residues coordinate DNA: H90, R109, and K150. The segment at 235–269 (LVYGNKDKPCPRCGTKIKSIIIGQRNSFFCPQCQK) adopts an FPG-type zinc-finger fold. Residue R259 is the Proton donor; for delta-elimination activity of the active site.

Belongs to the FPG family. In terms of assembly, monomer. Requires Zn(2+) as cofactor.

The catalysed reaction is Hydrolysis of DNA containing ring-opened 7-methylguanine residues, releasing 2,6-diamino-4-hydroxy-5-(N-methyl)formamidopyrimidine.. It catalyses the reaction 2'-deoxyribonucleotide-(2'-deoxyribose 5'-phosphate)-2'-deoxyribonucleotide-DNA = a 3'-end 2'-deoxyribonucleotide-(2,3-dehydro-2,3-deoxyribose 5'-phosphate)-DNA + a 5'-end 5'-phospho-2'-deoxyribonucleoside-DNA + H(+). In terms of biological role, involved in base excision repair of DNA damaged by oxidation or by mutagenic agents. Acts as a DNA glycosylase that recognizes and removes damaged bases. Has a preference for oxidized purines, such as 7,8-dihydro-8-oxoguanine (8-oxoG). Has AP (apurinic/apyrimidinic) lyase activity and introduces nicks in the DNA strand. Cleaves the DNA backbone by beta-delta elimination to generate a single-strand break at the site of the removed base with both 3'- and 5'-phosphates. In Histophilus somni (strain 2336) (Haemophilus somnus), this protein is Formamidopyrimidine-DNA glycosylase.